The following is a 134-amino-acid chain: MKNFKVTVNGTEYDVAVEEMGGAAVASAPAARPAAAPAPAAPKPAAAPAPAPAPKTTAAGAGAGANTVTAPMPGTILNVGCHAGDKVSKGDTLVVLEAMKMENEIMAPHDGVVSEVRVQQGASVNAGDILVVLS.

The span at 28–38 (APAARPAAAPA) shows a compositional bias: low complexity. The disordered stretch occupies residues 28–67 (APAARPAAAPAPAAPKPAAAPAPAPAPKTTAAGAGAGANT). The span at 39 to 53 (PAAPKPAAAPAPAPA) shows a compositional bias: pro residues. The span at 54–67 (PKTTAAGAGAGANT) shows a compositional bias: low complexity. The region spanning 58–134 (AAGAGAGANT…NAGDILVVLS (77 aa)) is the Biotinyl-binding domain. Position 100 is an N6-biotinyllysine (K100).

The methylmalonyl-CoA decarboxylase is composed of four subunits: the carboxyltransferase alpha subunit (MmdA), the tunnel beta subunit (MmdB), the biotin-containing gamma subunit (MmdC) and the delta subunit (MmdD). Requires biotin as cofactor.

It is found in the cell membrane. It catalyses the reaction (S)-methylmalonyl-CoA + Na(+)(in) + H(+)(out) = propanoyl-CoA + Na(+)(out) + CO2. Its function is as follows. Biotin-containing subunit of the sodium ion pump methylmalonyl-CoA decarboxylase, which converts the chemical energy of a decarboxylation reaction into an electrochemical gradient of Na(+) ions across the cytoplasmic membrane, thereby creating a sodium ion motive force that is used for ATP synthesis. The protein is Methylmalonyl-CoA decarboxylase subunit gamma of Propionigenium modestum.